We begin with the raw amino-acid sequence, 136 residues long: Protein LpdD (136 aa).

Belongs to the CinA family.

Its function is as follows. Probably involved in tannin degradation, however the precise biochemical function in metabolism of gallate is unknown. This chain is Protein LpdD, found in Lactiplantibacillus plantarum (strain ATCC BAA-793 / NCIMB 8826 / WCFS1) (Lactobacillus plantarum).